Here is a 488-residue protein sequence, read N- to C-terminus: Transmembrane protein 39A (488 aa).

2 N-linked (GlcNAc...) asparagine glycosylation sites follow: asparagine 31 and asparagine 39. The next 8 helical transmembrane spans lie at 72 to 92, 110 to 130, 154 to 174, 182 to 202, 287 to 307, 319 to 339, 420 to 440, and 446 to 466; these read SLLFEFLFFIYLLVALFIQYI, TSLNFHLIDYHLAAFITVMLA, VLISARLVLLTLCGWVLCWTL, SVLNLLFLGYPFGVYVPLCCF, EVLFNSLFSAYYVAFLPLCFV, CEHLIMVWINAFVMLTTQLLP, LLNLLILIEGSVVFYQLYSLL, and NHTLSMALILFCNYYVLFKLL.

It belongs to the TMEM39 family. As to quaternary structure, interacts with SACM1L, SEC23A and SEC24A.

The protein localises to the endoplasmic reticulum membrane. In terms of biological role, regulates autophagy by controlling the spatial distribution and levels of the intracellular phosphatidylinositol 4-phosphate (PtdIns(4)P) pools. Modulates (PtdIns(4)P) levels by regulating the ER-to-Golgi trafficking of the phosphatidylinositide phosphatase SACM1L. This chain is Transmembrane protein 39A (TMEM39A), found in Bos taurus (Bovine).